Here is a 482-residue protein sequence, read N- to C-terminus: Carbamoyl phosphate synthase large chain, N-terminal section (482 aa).

The tract at residues 1 to 398 (MESIKKVMVF…ALQKAIRSLD (398 aa)) is carboxyphosphate synthetic domain. 12 residues coordinate ATP: Arg-126, Arg-166, Gly-172, Gly-173, Glu-205, Val-207, Glu-212, Gly-238, Ile-239, His-240, Gln-281, and Glu-295. In terms of domain architecture, ATP-grasp spans 130–324 (AEAMAEINEP…IARIAAKIAI (195 aa)). Residues Gln-281, Glu-295, and Asn-297 each contribute to the Mg(2+) site. Gln-281, Glu-295, and Asn-297 together coordinate Mn(2+).

Belongs to the CarB family. As to quaternary structure, composed of two chains; the small (or glutamine) chain promotes the hydrolysis of glutamine to ammonia, which is used by the large (or ammonia) chain to synthesize carbamoyl phosphate. Tetramer of heterodimers (alpha,beta)4. Mg(2+) serves as cofactor. Requires Mn(2+) as cofactor.

The enzyme catalyses hydrogencarbonate + L-glutamine + 2 ATP + H2O = carbamoyl phosphate + L-glutamate + 2 ADP + phosphate + 2 H(+). It catalyses the reaction hydrogencarbonate + NH4(+) + 2 ATP = carbamoyl phosphate + 2 ADP + phosphate + 2 H(+). It functions in the pathway amino-acid biosynthesis; L-arginine biosynthesis; carbamoyl phosphate from bicarbonate: step 1/1. The protein operates within pyrimidine metabolism; UMP biosynthesis via de novo pathway; (S)-dihydroorotate from bicarbonate: step 1/3. Functionally, large subunit of the glutamine-dependent carbamoyl phosphate synthetase (CPSase). CPSase catalyzes the formation of carbamoyl phosphate from the ammonia moiety of glutamine, carbonate, and phosphate donated by ATP, constituting the first step of 2 biosynthetic pathways, one leading to arginine and/or urea and the other to pyrimidine nucleotides. The large subunit (synthetase) binds the substrates ammonia (free or transferred from glutamine from the small subunit), hydrogencarbonate and ATP and carries out an ATP-coupled ligase reaction, activating hydrogencarbonate by forming carboxy phosphate which reacts with ammonia to form carbamoyl phosphate. In Methanocaldococcus jannaschii (strain ATCC 43067 / DSM 2661 / JAL-1 / JCM 10045 / NBRC 100440) (Methanococcus jannaschii), this protein is Carbamoyl phosphate synthase large chain, N-terminal section (carB1).